The primary structure comprises 367 residues: tRNA 2-selenouridine synthase (367 aa).

The 124-residue stretch at phenylalanine 15–glutamate 138 folds into the Rhodanese domain. Cysteine 98 acts as the S-selanylcysteine intermediate in catalysis.

Belongs to the SelU family. Monomer.

The enzyme catalyses 5-methylaminomethyl-2-thiouridine(34) in tRNA + selenophosphate + (2E)-geranyl diphosphate + H2O + H(+) = 5-methylaminomethyl-2-selenouridine(34) in tRNA + (2E)-thiogeraniol + phosphate + diphosphate. The catalysed reaction is 5-methylaminomethyl-2-thiouridine(34) in tRNA + (2E)-geranyl diphosphate = 5-methylaminomethyl-S-(2E)-geranyl-thiouridine(34) in tRNA + diphosphate. It carries out the reaction 5-methylaminomethyl-S-(2E)-geranyl-thiouridine(34) in tRNA + selenophosphate + H(+) = 5-methylaminomethyl-2-(Se-phospho)selenouridine(34) in tRNA + (2E)-thiogeraniol. It catalyses the reaction 5-methylaminomethyl-2-(Se-phospho)selenouridine(34) in tRNA + H2O = 5-methylaminomethyl-2-selenouridine(34) in tRNA + phosphate. In terms of biological role, involved in the post-transcriptional modification of the uridine at the wobble position (U34) of tRNA(Lys), tRNA(Glu) and tRNA(Gln). Catalyzes the conversion of 2-thiouridine (S2U-RNA) to 2-selenouridine (Se2U-RNA). Acts in a two-step process involving geranylation of 2-thiouridine (S2U) to S-geranyl-2-thiouridine (geS2U) and subsequent selenation of the latter derivative to 2-selenouridine (Se2U) in the tRNA chain. This Shewanella denitrificans (strain OS217 / ATCC BAA-1090 / DSM 15013) protein is tRNA 2-selenouridine synthase.